The sequence spans 579 residues: Zinc finger protein 248 (579 aa).

In terms of domain architecture, KRAB spans 8 to 79; the sequence is VSFKDVCVDF…EKGFPSQCHP (72 aa). The C2H2-type 1; degenerate zinc finger occupies 240 to 264; sequence TVCKYNECGRTFIESLKLNISQRPH. Lysine 341 participates in a covalent cross-link: Glycyl lysine isopeptide (Lys-Gly) (interchain with G-Cter in SUMO2). 7 consecutive C2H2-type zinc fingers follow at residues 380-402, 408-430, 436-458, 464-486, 492-514, 520-543, and 548-570; these read FECG…QRTH, YECT…QRTH, YECK…QRTH, YECN…QRTH, FICN…QRTH, YKCN…RTHT, and YECN…QRIH.

The protein belongs to the krueppel C2H2-type zinc-finger protein family.

It localises to the nucleus. Its function is as follows. May be involved in transcriptional regulation. The chain is Zinc finger protein 248 (ZNF248) from Homo sapiens (Human).